A 460-amino-acid polypeptide reads, in one-letter code: MNTSAPPAVSPNITVLAPGKGPWQVAFIGITTGLLSLATVTGNLLVLISFKVNTELKTVNNYFLLSLACADLIIGTFSMNLYTTYLLMGHWALGTLACDLWLALDYVASNASVMNLLLISFDRYFSVTRPLSYRAKRTPRRAALMIGLAWLVSFVLWAPAILFWQYLVGERTVLAGQCYIQFLSQPIITFGTAMAAFYLPVTVMCTLYWRIYRETENRARELAALQGSETPGKGGGSSSSSERSQPGAEGSPETPPGRCCRCCRAPRLLQAYSWKEEEEEDEGSMESLTSSEGEEPGSEVVIKMPMVDPEAQAPAKQPPRSSPNTVKRPTRKGRERAGKGQKPRGKEQLAKRKTFSLVKEKKAARTLSAILLAFIVTWTPYNIMVLVSTFCKDCVPETLWELGYWLCYVNSTINPMCYALCNKAFRDTFRLLLLCRWDKRRWRKIPKRPGSVHRTPSRQC.

At 1 to 22 (MNTSAPPAVSPNITVLAPGKGP) the chain is on the extracellular side. Residues asparagine 2 and asparagine 12 are each glycosylated (N-linked (GlcNAc...) asparagine). Residues 23 to 48 (WQVAFIGITTGLLSLATVTGNLLVLI) traverse the membrane as a helical segment. Over 49–62 (SFKVNTELKTVNNY) the chain is Cytoplasmic. The chain crosses the membrane as a helical span at residues 63–84 (FLLSLACADLIIGTFSMNLYTT). Residues 85-95 (YLLMGHWALGT) lie on the Extracellular side of the membrane. Residues 96-121 (LACDLWLALDYVASNASVMNLLLISF) form a helical membrane-spanning segment. Residues cysteine 98 and cysteine 178 are joined by a disulfide bond. Residues 122–142 (DRYFSVTRPLSYRAKRTPRRA) lie on the Cytoplasmic side of the membrane. Residues 143-164 (ALMIGLAWLVSFVLWAPAILFW) traverse the membrane as a helical segment. Residues 165–185 (QYLVGERTVLAGQCYIQFLSQ) are Extracellular-facing. Residues 186–209 (PIITFGTAMAAFYLPVTVMCTLYW) traverse the membrane as a helical segment. Residues 210-366 (RIYRETENRA…LVKEKKAART (157 aa)) lie on the Cytoplasmic side of the membrane. Disordered stretches follow at residues 225–256 (LQGS…ETPP), 274–296 (WKEE…GEEP), and 310–351 (EAQA…QLAK). Residue threonine 230 is modified to Phosphothreonine. Positions 238–247 (SSSSERSQPG) are enriched in low complexity. Over residues 328 to 343 (RPTRKGRERAGKGQKP) the composition is skewed to basic residues. A helical membrane pass occupies residues 367-390 (LSAILLAFIVTWTPYNIMVLVSTF). The Extracellular segment spans residues 391–397 (CKDCVPE). The helical transmembrane segment at 398 to 420 (TLWELGYWLCYVNSTINPMCYAL) threads the bilayer. Over 421-460 (CNKAFRDTFRLLLLCRWDKRRWRKIPKRPGSVHRTPSRQC) the chain is Cytoplasmic. Residue threonine 428 is modified to Phosphothreonine. The residue at position 451 (serine 451) is a Phosphoserine. The residue at position 455 (threonine 455) is a Phosphothreonine. Serine 457 is modified (phosphoserine).

This sequence belongs to the G-protein coupled receptor 1 family. Muscarinic acetylcholine receptor subfamily. CHRM1 sub-subfamily. Interacts with GPRASP2. Interacts with TMEM147.

It is found in the cell membrane. The protein resides in the postsynaptic cell membrane. Its function is as follows. The muscarinic acetylcholine receptor mediates various cellular responses, including inhibition of adenylate cyclase, breakdown of phosphoinositides and modulation of potassium channels through the action of G proteins. Primary transducing effect is Pi turnover. The sequence is that of Muscarinic acetylcholine receptor M1 (CHRM1) from Sus scrofa (Pig).